A 659-amino-acid chain; its full sequence is Threonine--tRNA ligase (659 aa).

The TGS domain occupies 3–64; it reads EKIRITLIDN…LEDGRLEIIT (62 aa). A catalytic region spans residues 249–555; sequence DHRRLGQEMD…LIEHHAGRFP (307 aa). 3 residues coordinate Zn(2+): Cys354, His405, and His532.

Belongs to the class-II aminoacyl-tRNA synthetase family. As to quaternary structure, homodimer. Zn(2+) is required as a cofactor.

The protein localises to the cytoplasm. It carries out the reaction tRNA(Thr) + L-threonine + ATP = L-threonyl-tRNA(Thr) + AMP + diphosphate + H(+). Catalyzes the attachment of threonine to tRNA(Thr) in a two-step reaction: L-threonine is first activated by ATP to form Thr-AMP and then transferred to the acceptor end of tRNA(Thr). Also edits incorrectly charged L-seryl-tRNA(Thr). The sequence is that of Threonine--tRNA ligase from Zymomonas mobilis subsp. mobilis (strain ATCC 31821 / ZM4 / CP4).